The following is a 243-amino-acid chain: Ubiquinone/menaquinone biosynthesis C-methyltransferase UbiE (243 aa).

Residues Thr69, Asp90, and 116–117 (DA) contribute to the S-adenosyl-L-methionine site.

The protein belongs to the class I-like SAM-binding methyltransferase superfamily. MenG/UbiE family.

It catalyses the reaction a 2-demethylmenaquinol + S-adenosyl-L-methionine = a menaquinol + S-adenosyl-L-homocysteine + H(+). The enzyme catalyses a 2-methoxy-6-(all-trans-polyprenyl)benzene-1,4-diol + S-adenosyl-L-methionine = a 5-methoxy-2-methyl-3-(all-trans-polyprenyl)benzene-1,4-diol + S-adenosyl-L-homocysteine + H(+). The protein operates within quinol/quinone metabolism; menaquinone biosynthesis; menaquinol from 1,4-dihydroxy-2-naphthoate: step 2/2. It participates in cofactor biosynthesis; ubiquinone biosynthesis. Functionally, methyltransferase required for the conversion of demethylmenaquinol (DMKH2) to menaquinol (MKH2) and the conversion of 2-polyprenyl-6-methoxy-1,4-benzoquinol (DDMQH2) to 2-polyprenyl-3-methyl-6-methoxy-1,4-benzoquinol (DMQH2). The chain is Ubiquinone/menaquinone biosynthesis C-methyltransferase UbiE from Ralstonia pickettii (strain 12J).